The primary structure comprises 548 residues: T-complex protein 1 subunit theta (548 aa).

A2 is modified (N-acetylalanine). S23 bears the Phosphoserine mark. Y30 is modified (phosphotyrosine). The ADP site is built by Y47 and G48. D99 serves as a coordination point for Mg(2+). The ADP site is built by G100, T101, N102, and F103. ATP-binding residues include G100, T101, and N102. Position 162 is a phosphoserine (S162). ADP contacts are provided by M169, S170, and K171. ATP-binding residues include S170 and K171. Position 213 is a phosphoserine (S213). Residues K224, K254, and K260 each participate in a glycyl lysine isopeptide (Lys-Gly) (interchain with G-Cter in SUMO2) cross-link. Residues S269 and S317 each carry the phosphoserine modification. An N6-acetyllysine mark is found at K318 and K400. Residue G412 participates in ADP binding. An ATP-binding site is contributed by G412. Residue K459 forms a Glycyl lysine isopeptide (Lys-Gly) (interchain with G-Cter in SUMO1) linkage. K466 is subject to N6-acetyllysine. D499 serves as a coordination point for ADP. The ATP site is built by D499 and K504. A Phosphotyrosine modification is found at Y505. The disordered stretch occupies residues P529–D548. K534 participates in a covalent cross-link: Glycyl lysine isopeptide (Lys-Gly) (interchain with G-Cter in SUMO2). S537 is modified (phosphoserine). Residue K539 forms a Glycyl lysine isopeptide (Lys-Gly) (interchain with G-Cter in SUMO2) linkage.

This sequence belongs to the TCP-1 chaperonin family. In terms of assembly, component of the chaperonin-containing T-complex (TRiC), a hexadecamer composed of two identical back-to-back stacked rings enclosing a protein folding chamber. Each ring is made up of eight different subunits: TCP1/CCT1, CCT2, CCT3, CCT4, CCT5, CCT6A/CCT6, CCT7, CCT8. Interacts with PACRG. Interacts with DNAAF4. Interacts with synaptic plasticity regulator PANTS.

It is found in the cytoplasm. The protein localises to the cytoskeleton. The protein resides in the microtubule organizing center. It localises to the centrosome. Its subcellular location is the cilium basal body. It catalyses the reaction ATP + H2O = ADP + phosphate + H(+). In terms of biological role, component of the chaperonin-containing T-complex (TRiC), a molecular chaperone complex that assists the folding of actin, tubulin and other proteins upon ATP hydrolysis. The TRiC complex mediates the folding of WRAP53/TCAB1, thereby regulating telomere maintenance. As part of the TRiC complex may play a role in the assembly of BBSome, a complex involved in ciliogenesis regulating transports vesicles to the cilia. The polypeptide is T-complex protein 1 subunit theta (CCT8) (Homo sapiens (Human)).